A 368-amino-acid chain; its full sequence is Putative J domain-containing protein R445 (368 aa).

The J domain occupies 13–83 (DLYKILGLTN…KQRNEYNQRL (71 aa)).

The chain is Putative J domain-containing protein R445 from Acanthamoeba polyphaga mimivirus (APMV).